A 309-amino-acid chain; its full sequence is Homoserine O-succinyltransferase (309 aa).

Cysteine 142 acts as the Acyl-thioester intermediate in catalysis. Substrate contacts are provided by lysine 163 and serine 192. Residue histidine 235 is the Proton acceptor of the active site. Glutamate 237 is an active-site residue. Arginine 249 contacts substrate.

The protein belongs to the MetA family. In terms of assembly, homodimer.

The protein localises to the cytoplasm. The enzyme catalyses L-homoserine + succinyl-CoA = O-succinyl-L-homoserine + CoA. It participates in amino-acid biosynthesis; L-methionine biosynthesis via de novo pathway; O-succinyl-L-homoserine from L-homoserine: step 1/1. Functionally, transfers a succinyl group from succinyl-CoA to L-homoserine, forming succinyl-L-homoserine. This Escherichia coli O139:H28 (strain E24377A / ETEC) protein is Homoserine O-succinyltransferase.